The primary structure comprises 398 residues: Acetate kinase (398 aa).

Asn-10 is a binding site for Mg(2+). Lys-17 serves as a coordination point for ATP. Residue Arg-91 participates in substrate binding. The active-site Proton donor/acceptor is Asp-148. ATP-binding positions include 208–212 (HLGNG), 283–285 (DCR), and 331–335 (GIGEN). A Mg(2+)-binding site is contributed by Glu-385.

It belongs to the acetokinase family. Homodimer. It depends on Mg(2+) as a cofactor. The cofactor is Mn(2+).

It localises to the cytoplasm. The catalysed reaction is acetate + ATP = acetyl phosphate + ADP. Its pathway is metabolic intermediate biosynthesis; acetyl-CoA biosynthesis; acetyl-CoA from acetate: step 1/2. In terms of biological role, catalyzes the formation of acetyl phosphate from acetate and ATP. Can also catalyze the reverse reaction. The protein is Acetate kinase of Shewanella pealeana (strain ATCC 700345 / ANG-SQ1).